Here is an 872-residue protein sequence, read N- to C-terminus: Cadherin-1 (872 aa).

A signal peptide spans 1 to 25 (MGLKRPWLLGAVVLLTLIQVQGGLA). Residues 26-148 (EWTQCRMGFS…SETGLKRQKR (123 aa)) constitute a propeptide that is removed on maturation. Cadherin domains follow at residues 148-256 (RDWV…DPVF), 257-370 (TQSV…PPVF), 371-481 (DPTQ…APIF), 482-589 (LPPV…GPFL), and 605-688 (VFTI…MQCE). Residues 149 to 701 (DWVIPPIIVS…AIAGGLGISA (553 aa)) are Extracellular-facing. Residue asparagine 209 is glycosylated (N-linked (GlcNAc...) asparagine). Aspartate 251 and aspartate 282 together coordinate Ca(2+). Asparagine 456, asparagine 552, asparagine 631, and asparagine 669 each carry an N-linked (GlcNAc...) asparagine glycan. The chain crosses the membrane as a helical span at residues 702–722 (IVGILGGILALLLLLLLLLLF). Over 723–872 (VRRKKVVKEP…LADMYGGDED (150 aa)) the chain is Cytoplasmic. A disordered region spans residues 739-758 (ETRDNVFSYDEEGGGEEDQD). Positions 747 to 758 (YDEEGGGEEDQD) are enriched in acidic residues.

Homodimer. In terms of tissue distribution, abundantly expressed in intestine, stomach, liver, kidney, skin and eye. Also expressed in heart, lung, testis, ovary, muscle and brain.

Its subcellular location is the cell junction. The protein localises to the adherens junction. The protein resides in the cell membrane. It is found in the endosome. It localises to the golgi apparatus. Its subcellular location is the trans-Golgi network. The protein localises to the cytoplasm. The protein resides in the desmosome. Cadherins are calcium-dependent cell adhesion proteins. They preferentially interact with themselves in a homophilic manner in connecting cells; cadherins may thus contribute to the sorting of heterogeneous cell types. Promotes organization of radial actin fiber structure and cellular response to contractile forces, via anchoring of radial actin fibers to CDH1 junction complexes at the cell membrane. E-cadherin is a ligand for integrin alpha-E/beta-7. This chain is Cadherin-1 (cdh1), found in Xenopus laevis (African clawed frog).